A 228-amino-acid polypeptide reads, in one-letter code: Cytochrome b5 domain-containing protein 1 (228 aa).

Residues 17-83 form the Cytochrome b5 heme-binding domain; it reads RRYFTPAEVA…DPKTRDIRKH (67 aa). 2 residues coordinate heme: Tyr-52 and His-83.

The protein belongs to the cytochrome b5 family.

The protein resides in the cytoplasm. It localises to the cytoskeleton. The protein localises to the cilium axoneme. In terms of biological role, radial spoke stalk protein that binds heme under oxidizing conditions. Required for the coordinated beating of multiple cilia maybe by functioning in a redox signaling pathway. This is Cytochrome b5 domain-containing protein 1 from Homo sapiens (Human).